The following is a 353-amino-acid chain: Ferrochelatase (353 aa).

Histidine 223 and glutamate 304 together coordinate Fe cation.

Belongs to the ferrochelatase family.

The protein localises to the cytoplasm. It catalyses the reaction heme b + 2 H(+) = protoporphyrin IX + Fe(2+). Its pathway is porphyrin-containing compound metabolism; protoheme biosynthesis; protoheme from protoporphyrin-IX: step 1/1. Functionally, catalyzes the ferrous insertion into protoporphyrin IX. The sequence is that of Ferrochelatase from Mesorhizobium japonicum (strain LMG 29417 / CECT 9101 / MAFF 303099) (Mesorhizobium loti (strain MAFF 303099)).